The following is a 281-amino-acid chain: Cytochrome c oxidase subunit 3 (281 aa).

A run of 7 helical transmembrane segments spans residues Pro34–Phe54, Asn59–Phe79, Gly103–Phe123, Trp148–Ala168, Val179–Phe199, Ala220–Phe240, and Ile259–Trp279.

The protein belongs to the cytochrome c oxidase subunit 3 family. In terms of assembly, component of the cytochrome c oxidase (complex IV, CIV), a multisubunit enzyme composed of a catalytic core of 3 subunits and several supernumerary subunits. The complex exists as a monomer or a dimer and forms supercomplexes (SCs) in the inner mitochondrial membrane with ubiquinol-cytochrome c oxidoreductase (cytochrome b-c1 complex, complex III, CIII).

The protein localises to the mitochondrion inner membrane. It carries out the reaction 4 Fe(II)-[cytochrome c] + O2 + 8 H(+)(in) = 4 Fe(III)-[cytochrome c] + 2 H2O + 4 H(+)(out). Its function is as follows. Component of the cytochrome c oxidase, the last enzyme in the mitochondrial electron transport chain which drives oxidative phosphorylation. The respiratory chain contains 3 multisubunit complexes succinate dehydrogenase (complex II, CII), ubiquinol-cytochrome c oxidoreductase (cytochrome b-c1 complex, complex III, CIII) and cytochrome c oxidase (complex IV, CIV), that cooperate to transfer electrons derived from NADH and succinate to molecular oxygen, creating an electrochemical gradient over the inner membrane that drives transmembrane transport and the ATP synthase. Cytochrome c oxidase is the component of the respiratory chain that catalyzes the reduction of oxygen to water. Electrons originating from reduced cytochrome c in the intermembrane space (IMS) are transferred via the dinuclear copper A center (CU(A)) of subunit 2 and heme A of subunit 1 to the active site in subunit 1, a binuclear center (BNC) formed by heme A3 and copper B (CU(B)). The BNC reduces molecular oxygen to 2 water molecules using 4 electrons from cytochrome c in the IMS and 4 protons from the mitochondrial matrix. This is Cytochrome c oxidase subunit 3 (COX3) from Rhizopus stolonifer (Rhizopus nigricans).